A 559-amino-acid polypeptide reads, in one-letter code: Pentatricopeptide repeat-containing protein At2g42920, chloroplastic (559 aa).

A chloroplast-targeting transit peptide spans 1-14 (MSPTILSFSGVTVP). 10 PPR repeats span residues 88–122 (NPFVWNTIIRGFSRSSFPEMAISIFIDMLCSSPSV), 125–159 (QRLTYPSVFKAYGRLGQARDGRQLHGMVIKEGLED), 160–190 (DSFIRNTMLHMYVTCGCLIEAWRIFLGMIGF), 191–221 (DVVAWNSMIMGFAKCGLIDQAQNLFDEMPQR), 222–256 (NGVSWNSMISGFVRNGRFKDALDMFREMQEKDVKP), 257–291 (DGFTMVSLLNACAYLGASEQGRWIHEYIVRNRFEL), 292–322 (NSIVVTALIDMYCKCGCIEEGLNVFECAPKK), 323–357 (QLSCWNSMILGLANNGFEERAMDLFSELERSGLEP), 358–388 (DSVSFIGVLTACAHSGEVHRADEFFRLMKEK), and 394–424 (SIKHYTLMVNVLGGAGLLEEAEALIKNMPVE). The tract at residues 429 to 504 (IWSSLLSACR…EVGCSSIEVD (76 aa)) is type E motif. The segment at 505–535 (FEVHEFISCGGTHPKSAEIYSLLDILNWDVS) is type E(+) motif.

Belongs to the PPR family. PCMP-E subfamily.

The protein localises to the plastid. It localises to the chloroplast. The polypeptide is Pentatricopeptide repeat-containing protein At2g42920, chloroplastic (PCMP-E75) (Arabidopsis thaliana (Mouse-ear cress)).